Here is a 471-residue protein sequence, read N- to C-terminus: E3 ubiquitin-protein ligase TRIM38 (471 aa).

The RING-type zinc-finger motif lies at 16-62 (CSICKAMMSHPVSINCGHSYCKSCIQSYYCNVSPKTGWKMLGCPLCS). The B box-type zinc-finger motif lies at 90–131 (DQDMVCEEHEEKFNRFCEDDGQLLCWRCYWEDRHKGHTLAHV). Zn(2+)-binding residues include C95, H98, C117, and H123. The B30.2/SPRY domain maps to 276–471 (CNVSELYFDV…PLFLPAINNQ (196 aa)).

In terms of assembly, interacts (via B30.2/SPRY domain) with TAB2 and TAB3.

The protein resides in the cytoplasm. The catalysed reaction is S-ubiquitinyl-[E2 ubiquitin-conjugating enzyme]-L-cysteine + [acceptor protein]-L-lysine = [E2 ubiquitin-conjugating enzyme]-L-cysteine + N(6)-ubiquitinyl-[acceptor protein]-L-lysine.. The protein operates within protein modification; protein ubiquitination. It participates in protein modification; protein sumoylation. In terms of biological role, E3 ubiquitin-protein and E3 SUMO-protein ligase that acts as a regulator of innate immunity. Acts as a negative regulator of type I interferon IFN-beta production by catalyzing 'Lys-48'-linked polyubiquitination of AZI2/NAP1, leading to its degradation. Mediates 'Lys-48'-linked polyubiquitination and proteasomal degradation of the critical TLR adapter TICAM1, inhibiting TLR3-mediated type I interferon signaling. Acts as a positive regulator of the cGAS-STING pathway by acting as a E3 SUMO-protein ligase: mediates sumoylation of CGAS and STING, preventing their degradation and thereby activating the innate immune response to DNA virus. Also acts as a negative regulator of NF-kappa-B signaling independently of its E3 protein ligase activity by promoting lysosome-dependent degradation of TAB2 and TAB3 adapters. In Mus musculus (Mouse), this protein is E3 ubiquitin-protein ligase TRIM38.